A 369-amino-acid polypeptide reads, in one-letter code: Protein-glutamate methylesterase/protein-glutamine glutaminase 1 (369 aa).

Positions 3 to 120 (KVVVVDDSAF…SLDIVKIEKD (118 aa)) constitute a Response regulatory domain. Asp54 bears the 4-aspartylphosphate mark. Positions 136–168 (RSFRPAPAVRPAAPAALRATPRPSAAPSSAASS) are enriched in low complexity. Positions 136-174 (RSFRPAPAVRPAAPAALRATPRPSAAPSSAASSTGTLQV) are disordered. In terms of domain architecture, CheB-type methylesterase spans 177-369 (GKPVRDVVAI…AQAIMNAVYK (193 aa)). Catalysis depends on residues Ser189, His216, and Asp312.

This sequence belongs to the CheB family. Phosphorylated by CheA. Phosphorylation of the N-terminal regulatory domain activates the methylesterase activity.

The protein localises to the cytoplasm. The enzyme catalyses [protein]-L-glutamate 5-O-methyl ester + H2O = L-glutamyl-[protein] + methanol + H(+). It catalyses the reaction L-glutaminyl-[protein] + H2O = L-glutamyl-[protein] + NH4(+). In terms of biological role, involved in chemotaxis. Part of a chemotaxis signal transduction system that modulates chemotaxis in response to various stimuli. Catalyzes the demethylation of specific methylglutamate residues introduced into the chemoreceptors (methyl-accepting chemotaxis proteins or MCP) by CheR. Also mediates the irreversible deamidation of specific glutamine residues to glutamic acid. This is Protein-glutamate methylesterase/protein-glutamine glutaminase 1 from Oleidesulfovibrio alaskensis (strain ATCC BAA-1058 / DSM 17464 / G20) (Desulfovibrio alaskensis).